The primary structure comprises 590 residues: Aspartate--tRNA(Asp/Asn) ligase (590 aa).

Residue Glu-175 participates in L-aspartate binding. The segment at Gln-199–Lys-202 is aspartate. Positions 221 and 452 each coordinate L-aspartate. Arg-221–Glu-223 is a binding site for ATP. An ATP-binding site is contributed by Glu-485. Arg-492 is a binding site for L-aspartate. Gly-537–Arg-540 contributes to the ATP binding site.

The protein belongs to the class-II aminoacyl-tRNA synthetase family. Type 1 subfamily. As to quaternary structure, homodimer.

The protein resides in the cytoplasm. It carries out the reaction tRNA(Asx) + L-aspartate + ATP = L-aspartyl-tRNA(Asx) + AMP + diphosphate. Aspartyl-tRNA synthetase with relaxed tRNA specificity since it is able to aspartylate not only its cognate tRNA(Asp) but also tRNA(Asn). Reaction proceeds in two steps: L-aspartate is first activated by ATP to form Asp-AMP and then transferred to the acceptor end of tRNA(Asp/Asn). In Dinoroseobacter shibae (strain DSM 16493 / NCIMB 14021 / DFL 12), this protein is Aspartate--tRNA(Asp/Asn) ligase.